We begin with the raw amino-acid sequence, 288 residues long: Bifunctional protein FolD (288 aa).

NADP(+) is bound by residues 166–168 (GAS) and I232.

Belongs to the tetrahydrofolate dehydrogenase/cyclohydrolase family. In terms of assembly, homodimer.

The enzyme catalyses (6R)-5,10-methylene-5,6,7,8-tetrahydrofolate + NADP(+) = (6R)-5,10-methenyltetrahydrofolate + NADPH. The catalysed reaction is (6R)-5,10-methenyltetrahydrofolate + H2O = (6R)-10-formyltetrahydrofolate + H(+). The protein operates within one-carbon metabolism; tetrahydrofolate interconversion. Functionally, catalyzes the oxidation of 5,10-methylenetetrahydrofolate to 5,10-methenyltetrahydrofolate and then the hydrolysis of 5,10-methenyltetrahydrofolate to 10-formyltetrahydrofolate. This Citrobacter koseri (strain ATCC BAA-895 / CDC 4225-83 / SGSC4696) protein is Bifunctional protein FolD.